Here is a 188-residue protein sequence, read N- to C-terminus: ATP synthase subunit delta (188 aa).

The protein belongs to the ATPase delta chain family. F-type ATPases have 2 components, F(1) - the catalytic core - and F(0) - the membrane proton channel. F(1) has five subunits: alpha(3), beta(3), gamma(1), delta(1), epsilon(1). F(0) has three main subunits: a(1), b(2) and c(10-14). The alpha and beta chains form an alternating ring which encloses part of the gamma chain. F(1) is attached to F(0) by a central stalk formed by the gamma and epsilon chains, while a peripheral stalk is formed by the delta and b chains.

Its subcellular location is the cell inner membrane. In terms of biological role, f(1)F(0) ATP synthase produces ATP from ADP in the presence of a proton or sodium gradient. F-type ATPases consist of two structural domains, F(1) containing the extramembraneous catalytic core and F(0) containing the membrane proton channel, linked together by a central stalk and a peripheral stalk. During catalysis, ATP synthesis in the catalytic domain of F(1) is coupled via a rotary mechanism of the central stalk subunits to proton translocation. This protein is part of the stalk that links CF(0) to CF(1). It either transmits conformational changes from CF(0) to CF(1) or is implicated in proton conduction. The polypeptide is ATP synthase subunit delta (Rhizobium leguminosarum bv. trifolii (strain WSM2304)).